Here is a 470-residue protein sequence, read N- to C-terminus: Cysteine--tRNA ligase (470 aa).

Cysteine 46 serves as a coordination point for Zn(2+). The 'HIGH' region motif lies at 48-58 (PTVYDLAHIGN). 3 residues coordinate Zn(2+): cysteine 230, histidine 255, and glutamate 259. Residues 288–292 (KMSKS) carry the 'KMSKS' region motif. Lysine 291 is an ATP binding site.

It belongs to the class-I aminoacyl-tRNA synthetase family. As to quaternary structure, monomer. Requires Zn(2+) as cofactor.

It is found in the cytoplasm. The catalysed reaction is tRNA(Cys) + L-cysteine + ATP = L-cysteinyl-tRNA(Cys) + AMP + diphosphate. This chain is Cysteine--tRNA ligase, found in Granulibacter bethesdensis (strain ATCC BAA-1260 / CGDNIH1).